The primary structure comprises 56 residues: MAHENVWFSHPRRYGKGSRQCRVCSSHTGLIRKYGLNICRQCFREKANDIGFNKFR.

Zn(2+) is bound by residues Cys-21 and Cys-24. Residue Ser-25 is modified to Phosphoserine. 2 residues coordinate Zn(2+): Cys-39 and Cys-42.

Belongs to the universal ribosomal protein uS14 family. As to quaternary structure, component of the small ribosomal subunit (SSU). Mature yeast ribosomes consist of a small (40S) and a large (60S) subunit. The 40S small subunit contains 1 molecule of ribosomal RNA (18S rRNA) and 33 different proteins (encoded by 57 genes). The large 60S subunit contains 3 rRNA molecules (25S, 5.8S and 5S rRNA) and 46 different proteins (encoded by 81 genes). Zn(2+) serves as cofactor.

The protein resides in the cytoplasm. Its function is as follows. Component of the ribosome, a large ribonucleoprotein complex responsible for the synthesis of proteins in the cell. The small ribosomal subunit (SSU) binds messenger RNAs (mRNAs) and translates the encoded message by selecting cognate aminoacyl-transfer RNA (tRNA) molecules. The large subunit (LSU) contains the ribosomal catalytic site termed the peptidyl transferase center (PTC), which catalyzes the formation of peptide bonds, thereby polymerizing the amino acids delivered by tRNAs into a polypeptide chain. The nascent polypeptides leave the ribosome through a tunnel in the LSU and interact with protein factors that function in enzymatic processing, targeting, and the membrane insertion of nascent chains at the exit of the ribosomal tunnel. This Saccharomyces cerevisiae (strain ATCC 204508 / S288c) (Baker's yeast) protein is Small ribosomal subunit protein uS14A.